Here is a 179-residue protein sequence, read N- to C-terminus: Large ribosomal subunit protein uL5 (179 aa).

This sequence belongs to the universal ribosomal protein uL5 family. In terms of assembly, part of the 50S ribosomal subunit; part of the 5S rRNA/L5/L18/L25 subcomplex. Contacts the 5S rRNA and the P site tRNA. Forms a bridge to the 30S subunit in the 70S ribosome.

This is one of the proteins that bind and probably mediate the attachment of the 5S RNA into the large ribosomal subunit, where it forms part of the central protuberance. In the 70S ribosome it contacts protein S13 of the 30S subunit (bridge B1b), connecting the 2 subunits; this bridge is implicated in subunit movement. Contacts the P site tRNA; the 5S rRNA and some of its associated proteins might help stabilize positioning of ribosome-bound tRNAs. The chain is Large ribosomal subunit protein uL5 from Rickettsia rickettsii (strain Iowa).